The sequence spans 169 residues: Orotate phosphoribosyltransferase (169 aa).

Residues Arg86, Lys90, His92, and 111-119 (EDVTTSGGS) each bind 5-phospho-alpha-D-ribose 1-diphosphate. Thr115 and Arg143 together coordinate orotate.

This sequence belongs to the purine/pyrimidine phosphoribosyltransferase family. PyrE subfamily. Homodimer. The cofactor is Mg(2+).

It carries out the reaction orotidine 5'-phosphate + diphosphate = orotate + 5-phospho-alpha-D-ribose 1-diphosphate. It participates in pyrimidine metabolism; UMP biosynthesis via de novo pathway; UMP from orotate: step 1/2. In terms of biological role, catalyzes the transfer of a ribosyl phosphate group from 5-phosphoribose 1-diphosphate to orotate, leading to the formation of orotidine monophosphate (OMP). The protein is Orotate phosphoribosyltransferase of Methanocorpusculum labreanum (strain ATCC 43576 / DSM 4855 / Z).